Consider the following 440-residue polypeptide: MLTGVTDGIFCCLLGTPPNAVGPLESVESSDGYTFVEVKPGRVLRVKHAGPAPASAAPPPLSASSDAAQGDLSGLVRCQRRITVYRNGRLLVENLGRAPRADLLHGQNGSGEPPAALEMELADPAGSDGRSAPGSGSGSGSGSGSGGRRRRARRPKRTIHIDCEKRITSCKGAQADVVLFFIHGVGGSLAIWKEQLDFFVRLGYEVVAPDLAGHGASSAPQVAAAYTFYALAEDMRAIFKRYAKKRNVLIGHSYGVSFCTFLAHEYPDLVHKVIMINGGGPTALEPSFCSIFNMPTCVLHCLSPCLAWSFLKAGFARQGAKEKQLLKEGNAFNVSSFVLRAMMSGQYWPEGDEVYHAELTVPVLLVHGMHDKFVPVEEDQRMAEILLLAFLKLIDEGSHMVMLECPETVNTLLHEFLLWEPEPSPKALPEPLPAPPEDKK.

The tract at residues 123–158 (DPAGSDGRSAPGSGSGSGSGSGSGGRRRRARRPKRT) is disordered. Low complexity predominate over residues 124 to 134 (PAGSDGRSAPG). The segment covering 135 to 146 (SGSGSGSGSGSG) has biased composition (gly residues). Over residues 147–158 (GRRRRARRPKRT) the composition is skewed to basic residues. The 103-residue stretch at 178–280 (VLFFIHGVGG…HKVIMINGGG (103 aa)) folds into the AB hydrolase-1 domain. Catalysis depends on charge relay system residues Ser-253, Asp-371, and His-399.

Belongs to the AB hydrolase superfamily. In terms of assembly, interacts with NLRP3 (via NACHT and LLR domains); this interaction is enhanced in the presence of NLRP3 inflammasome inducers, such as ATP, nigericin, silica, or alum. Interacts with ZDHHC12.

It is found in the cytoplasm. In terms of biological role, negatively regulates NLRP3-driven inflammation. Promotes NLRP3 degradation through the chaperone-mediated autophagy (CMA) pathway, hence attenuating inflammasome activation and IL1B secretion. Acts by recruiting palmitoyltransferase ZDHHC12 to NLRP3, facilitating NLRP3 palmitoylation and subsequent degradation. The sequence is that of Protein ABHD8 from Macaca fascicularis (Crab-eating macaque).